We begin with the raw amino-acid sequence, 163 residues long: Large ribosomal subunit protein uL10 (163 aa).

The protein belongs to the universal ribosomal protein uL10 family. As to quaternary structure, part of the ribosomal stalk of the 50S ribosomal subunit. The N-terminus interacts with L11 and the large rRNA to form the base of the stalk. The C-terminus forms an elongated spine to which L12 dimers bind in a sequential fashion forming a multimeric L10(L12)X complex.

Forms part of the ribosomal stalk, playing a central role in the interaction of the ribosome with GTP-bound translation factors. The chain is Large ribosomal subunit protein uL10 (rplJ) from Haemophilus influenzae (strain ATCC 51907 / DSM 11121 / KW20 / Rd).